The chain runs to 920 residues: Protein translocase subunit SecA (920 aa).

Residues Gln-85, 103–107, and Asp-514 each bind ATP; that span reads GEGKT. Zn(2+)-binding residues include Cys-904, Cys-906, Cys-915, and His-916.

This sequence belongs to the SecA family. As to quaternary structure, monomer and homodimer. Part of the essential Sec protein translocation apparatus which comprises SecA, SecYEG and auxiliary proteins SecDF-YajC and YidC. Zn(2+) is required as a cofactor.

It localises to the cell inner membrane. Its subcellular location is the cytoplasm. It carries out the reaction ATP + H2O + cellular proteinSide 1 = ADP + phosphate + cellular proteinSide 2.. In terms of biological role, part of the Sec protein translocase complex. Interacts with the SecYEG preprotein conducting channel. Has a central role in coupling the hydrolysis of ATP to the transfer of proteins into and across the cell membrane, serving both as a receptor for the preprotein-SecB complex and as an ATP-driven molecular motor driving the stepwise translocation of polypeptide chains across the membrane. This chain is Protein translocase subunit SecA, found in Janthinobacterium sp. (strain Marseille) (Minibacterium massiliensis).